The chain runs to 161 residues: Nucleotide-binding protein Pcar_0033 (161 aa).

It belongs to the YajQ family.

In terms of biological role, nucleotide-binding protein. The protein is Nucleotide-binding protein Pcar_0033 of Syntrophotalea carbinolica (strain DSM 2380 / NBRC 103641 / GraBd1) (Pelobacter carbinolicus).